A 249-amino-acid polypeptide reads, in one-letter code: Oxidoreductase asL5 (249 aa).

Residues Ile-21, Lys-45, Asn-90, Tyr-155, Lys-159, Ile-188, and Thr-190 each coordinate NADP(+). Catalysis depends on Tyr-155, which acts as the Proton acceptor. The active-site Lowers pKa of active site Tyr is the Lys-159.

Belongs to the short-chain dehydrogenases/reductases (SDR) family.

Oxidoreductase; part of the gene cluster that mediates the biosynthesis of xenovulene A, an unusual meroterpenoid that has potent inhibitory effects on the human gamma-aminobutyrate A (GABAA) benzodiazepine receptor. The first step of xenovulene A biosynthesis is the biosynthesis of 3-methylorcinaldehyde performed by the non-reducing polyketide synthase aspks1. The salicylate hydroxylase asL1 then catalyzes the oxidative dearomatization of 3-methylorcinaldehyde to yield a dearomatized hydroxycyclohexadione. The 2-oxoglutarate-dependent dioxygenase asL3 further catalyzes the oxidative ring expansion to provide the first tropolone metabolite. The cytochrome P450 monooxygenase asR2 allows the synthesis of tropolone hemiacetal. In parallel, a previously unrecognised class of terpene cyclase, asR6, produces alpha-humulene from farnesylpyrophosphate (FPP). The putative Diels-Alderase asR5 probably catalyzes the formation of the tropolone-humulene skeleton by linking humulene and the polyketide moiety. Oxidative-ring contractions catalyzed by asL4 and asL6 then processively remove carbon atoms from the polyketide to yield xenovulene A. This Sarocladium schorii (Acremonium strictum (strain IMI 501407)) protein is Oxidoreductase asL5.